We begin with the raw amino-acid sequence, 492 residues long: Spore germination protein GerLA (492 aa).

A run of 3 helical transmembrane segments spans residues 295–315, 384–404, and 410–430; these read IIAV…QGLI, FLVI…VYSI, and ILLF…IILA.

It belongs to the GerABKA family.

The protein localises to the membrane. Functionally, contributes to the L-alanine germination response. In Bacillus cereus, this protein is Spore germination protein GerLA (gerLA).